Reading from the N-terminus, the 75-residue chain is Psi-conotoxin PIIIE (75 aa).

Positions 1 to 19 (MSKLGALLTICLLLFPITA) are cleaved as a signal peptide. A propeptide spanning residues 20–50 (LLMDGDQPADRPAERMDYDISSEVHRLLERR) is cleaved from the precursor. A 4-hydroxyproline mark is found at proline 52, proline 53, and proline 64. Cystine bridges form between cysteine 54–cysteine 66, cysteine 55–cysteine 71, and cysteine 60–cysteine 72. At glycine 74 the chain carries Glycine amide.

In terms of tissue distribution, expressed by the venom duct.

It localises to the secreted. Its function is as follows. Psi-conotoxins act on postsynaptic membranes, and act as non-competitive antagonist of nicotinic acetylcholine receptors (nAChR). Is more toxic than Psi-conotoxin PIIIF. In vivo, has paralytic activity when injected intraperitoneally into goldfish. This is Psi-conotoxin PIIIE from Conus purpurascens (Purple cone).